The primary structure comprises 96 residues: MGNLISTCSFSSRVNSTAKITDSSIWYPQPDQHISIRTFRELNQAPTSSPTSTRTEMFLNGVLSRSTDDLQGEDSRQPMTLTPRQLTQDVSRRLLM.

Gly2 is lipidated: N-myristoyl glycine; by host. The tract at residues 66 to 96 (STDDLQGEDSRQPMTLTPRQLTQDVSRRLLM) is disordered. Residues 77–89 (QPMTLTPRQLTQD) show a composition bias toward polar residues.

It belongs to the geminiviridae protein AC4/C4 family.

It localises to the host cell membrane. Its function is as follows. Pathogenicity determinant. May act as a suppressor of RNA-mediated gene silencing, also known as post-transcriptional gene silencing (PTGS), a mechanism of plant viral defense that limits the accumulation of viral RNAs. In Solanum lycopersicum (Tomato), this protein is Protein C4.